We begin with the raw amino-acid sequence, 370 residues long: Flagellar P-ring protein (370 aa).

An N-terminal signal peptide occupies residues 1-21; the sequence is MRLFSVVLAVFTLLLPSQAFA.

Belongs to the FlgI family. In terms of assembly, the basal body constitutes a major portion of the flagellar organelle and consists of four rings (L,P,S, and M) mounted on a central rod.

The protein localises to the periplasm. Its subcellular location is the bacterial flagellum basal body. In terms of biological role, assembles around the rod to form the L-ring and probably protects the motor/basal body from shearing forces during rotation. The chain is Flagellar P-ring protein from Alteromonas mediterranea (strain DSM 17117 / CIP 110805 / LMG 28347 / Deep ecotype).